A 209-amino-acid polypeptide reads, in one-letter code: Protein lin-28 homolog A (209 aa).

The interval 1 to 31 is disordered; it reads MGSVSNQQFAGGCAKAAEEAPEEAPEDAARA. G2 bears the N-acetylglycine mark. The residue at position 3 (S3) is a Phosphoserine. The CSD domain maps to 39–112; sequence HGAGICKWFN…GLESIRVTGP (74 aa). Residues 113 to 136 form a flexible linker region; it reads GGVFCIGSERRPKGKSMQKRRSKG. S120 carries the post-translational modification Phosphoserine. 2 CCHC-type zinc fingers span residues 137–154 and 159–176; these read DRCYNCGGLDHHAKECKL and KKCHFCQSISHMVASCPL. The interval 178-209 is disordered; the sequence is AQQGPSAQGKPTYFREEEEEIHSPTLLPEAQN. S200 is subject to Phosphoserine.

Belongs to the lin-28 family. Monomer. During skeletal muscle differentiation, associated with translation initiation complexes in the polysomal compartment. Directly interacts with EIF3S2. Interacts with NCL in an RNA-dependent manner. Interacts (via C-terminus) with DHX9 (via N- and C-terminus); this interaction occurs in a RNA-independent manner. Interacts with TUT4 in the presence of pre-let-7 RNA. As to expression, expressed in embryonic stem cells, placenta and testis. Tends to be up-regulated in HER2-overexpressing breast tumors.

It is found in the cytoplasm. The protein localises to the rough endoplasmic reticulum. The protein resides in the P-body. It localises to the stress granule. Its subcellular location is the nucleus. It is found in the nucleolus. RNA-binding protein that inhibits processing of pre-let-7 miRNAs and regulates translation of mRNAs that control developmental timing, pluripotency and metabolism. Seems to recognize a common structural G-quartet (G4) feature in its miRNA and mRNA targets. 'Translational enhancer' that drives specific mRNAs to polysomes and increases the efficiency of protein synthesis. Its association with the translational machinery and target mRNAs results in an increased number of initiation events per molecule of mRNA and, indirectly, in mRNA stabilization. Binds IGF2 mRNA, MYOD1 mRNA, ARBP/36B4 ribosomal protein mRNA and its own mRNA. Essential for skeletal muscle differentiation program through the translational up-regulation of IGF2 expression. Suppressor of microRNA (miRNA) biogenesis, including that of let-7, miR107, miR-143 and miR-200c. Specifically binds the miRNA precursors (pre-miRNAs), recognizing an 5'-GGAG-3' motif found in pre-miRNA terminal loop, and recruits TUT4 and TUT7 uridylyltransferases. This results in the terminal uridylation of target pre-miRNAs. Uridylated pre-miRNAs fail to be processed by Dicer and undergo degradation. The repression of let-7 expression is required for normal development and contributes to maintain the pluripotent state by preventing let-7-mediated differentiation of embryonic stem cells. Localized to the periendoplasmic reticulum area, binds to a large number of spliced mRNAs and inhibits the translation of mRNAs destined for the ER, reducing the synthesis of transmembrane proteins, ER or Golgi lumen proteins, and secretory proteins. Binds to and enhances the translation of mRNAs for several metabolic enzymes, such as PFKP, PDHA1 or SDHA, increasing glycolysis and oxidative phosphorylation. Which, with the let-7 repression may enhance tissue repair in adult tissue. The polypeptide is Protein lin-28 homolog A (LIN28A) (Homo sapiens (Human)).